Here is a 466-residue protein sequence, read N- to C-terminus: ATP synthase subunit beta (466 aa).

152-159 contacts ATP; sequence GGAGVGKT.

Belongs to the ATPase alpha/beta chains family. F-type ATPases have 2 components, CF(1) - the catalytic core - and CF(0) - the membrane proton channel. CF(1) has five subunits: alpha(3), beta(3), gamma(1), delta(1), epsilon(1). CF(0) has three main subunits: a(1), b(2) and c(9-12). The alpha and beta chains form an alternating ring which encloses part of the gamma chain. CF(1) is attached to CF(0) by a central stalk formed by the gamma and epsilon chains, while a peripheral stalk is formed by the delta and b chains.

It localises to the cell inner membrane. The enzyme catalyses ATP + H2O + 4 H(+)(in) = ADP + phosphate + 5 H(+)(out). Its function is as follows. Produces ATP from ADP in the presence of a proton gradient across the membrane. The catalytic sites are hosted primarily by the beta subunits. The chain is ATP synthase subunit beta from Sulfurovum sp. (strain NBC37-1).